A 72-amino-acid polypeptide reads, in one-letter code: Hypertrehalosaemic prohormone (72 aa).

The first 21 residues, 1–21 (MNHLVKVLIVVVAIALVLCEA), serve as a signal peptide directing secretion. Pyrrolidone carboxylic acid is present on Gln-22. Thr-31 carries the threonine amide modification.

The protein belongs to the AKH/HRTH/RPCH family. In terms of tissue distribution, expressed in corpora cardiaca.

Its subcellular location is the secreted. Its function is as follows. Hypertrehalosaemic factors are neuropeptides that elevate the level of trehalose in the hemolymph (trehalose is the major carbohydrate in the hemolymph of insects). In Blaberus discoidalis (Tropical cockroach), this protein is Hypertrehalosaemic prohormone.